The following is a 234-amino-acid chain: Phosphoribosylaminoimidazole-succinocarboxamide synthase (234 aa).

The protein belongs to the SAICAR synthetase family.

The catalysed reaction is 5-amino-1-(5-phospho-D-ribosyl)imidazole-4-carboxylate + L-aspartate + ATP = (2S)-2-[5-amino-1-(5-phospho-beta-D-ribosyl)imidazole-4-carboxamido]succinate + ADP + phosphate + 2 H(+). It participates in purine metabolism; IMP biosynthesis via de novo pathway; 5-amino-1-(5-phospho-D-ribosyl)imidazole-4-carboxamide from 5-amino-1-(5-phospho-D-ribosyl)imidazole-4-carboxylate: step 1/2. This chain is Phosphoribosylaminoimidazole-succinocarboxamide synthase, found in Streptococcus agalactiae serotype V (strain ATCC BAA-611 / 2603 V/R).